Reading from the N-terminus, the 139-residue chain is Large ribosomal subunit protein uL16 (139 aa).

The segment covering 1–20 has biased composition (basic residues); it reads MLMPRRVKHRKQHHPTRRGA. The tract at residues 1–24 is disordered; it reads MLMPRRVKHRKQHHPTRRGAAKGG.

It belongs to the universal ribosomal protein uL16 family. As to quaternary structure, part of the 50S ribosomal subunit.

Its function is as follows. Binds 23S rRNA and is also seen to make contacts with the A and possibly P site tRNAs. The sequence is that of Large ribosomal subunit protein uL16 from Nocardioides sp. (strain ATCC BAA-499 / JS614).